The chain runs to 364 residues: tRNA-specific 2-thiouridylase MnmA (364 aa).

ATP is bound by residues 13-20 (GMSGGVDS) and Met39. Residues 99-101 (NPD) are interaction with target base in tRNA. Cys104 acts as the Nucleophile in catalysis. The cysteines at positions 104 and 200 are disulfide-linked. Position 128 (Gly128) interacts with ATP. The interval 150 to 152 (KDQ) is interaction with tRNA. The active-site Cysteine persulfide intermediate is Cys200. An interaction with tRNA region spans residues 310-311 (RY).

It belongs to the MnmA/TRMU family.

The protein localises to the cytoplasm. The enzyme catalyses S-sulfanyl-L-cysteinyl-[protein] + uridine(34) in tRNA + AH2 + ATP = 2-thiouridine(34) in tRNA + L-cysteinyl-[protein] + A + AMP + diphosphate + H(+). In terms of biological role, catalyzes the 2-thiolation of uridine at the wobble position (U34) of tRNA, leading to the formation of s(2)U34. The chain is tRNA-specific 2-thiouridylase MnmA from Alkaliphilus oremlandii (strain OhILAs) (Clostridium oremlandii (strain OhILAs)).